The primary structure comprises 323 residues: Lipoyl synthase (323 aa).

The [4Fe-4S] cluster site is built by Cys-69, Cys-74, Cys-80, Cys-95, Cys-99, Cys-102, and Ser-310. One can recognise a Radical SAM core domain in the interval 81 to 299 (WTHGTLTVMI…EAWGYELGFR (219 aa)).

This sequence belongs to the radical SAM superfamily. Lipoyl synthase family. It depends on [4Fe-4S] cluster as a cofactor.

It is found in the cytoplasm. The catalysed reaction is [[Fe-S] cluster scaffold protein carrying a second [4Fe-4S](2+) cluster] + N(6)-octanoyl-L-lysyl-[protein] + 2 oxidized [2Fe-2S]-[ferredoxin] + 2 S-adenosyl-L-methionine + 4 H(+) = [[Fe-S] cluster scaffold protein] + N(6)-[(R)-dihydrolipoyl]-L-lysyl-[protein] + 4 Fe(3+) + 2 hydrogen sulfide + 2 5'-deoxyadenosine + 2 L-methionine + 2 reduced [2Fe-2S]-[ferredoxin]. It functions in the pathway protein modification; protein lipoylation via endogenous pathway; protein N(6)-(lipoyl)lysine from octanoyl-[acyl-carrier-protein]: step 2/2. In terms of biological role, catalyzes the radical-mediated insertion of two sulfur atoms into the C-6 and C-8 positions of the octanoyl moiety bound to the lipoyl domains of lipoate-dependent enzymes, thereby converting the octanoylated domains into lipoylated derivatives. The chain is Lipoyl synthase from Thermus thermophilus (strain ATCC 27634 / DSM 579 / HB8).